Consider the following 269-residue polypeptide: Ribonuclease HII (269 aa).

Residues 83-269 (YLIAGVDEVG…HRMSFLTNIL (187 aa)) form the RNase H type-2 domain. Positions 89, 90, and 185 each coordinate a divalent metal cation.

This sequence belongs to the RNase HII family. It depends on Mn(2+) as a cofactor. Mg(2+) is required as a cofactor.

The protein localises to the cytoplasm. The enzyme catalyses Endonucleolytic cleavage to 5'-phosphomonoester.. Its function is as follows. Endonuclease that specifically degrades the RNA of RNA-DNA hybrids. The sequence is that of Ribonuclease HII from Clostridium botulinum (strain Loch Maree / Type A3).